Here is a 574-residue protein sequence, read N- to C-terminus: GRB2-associated-binding protein 4 (574 aa).

The disordered stretch occupies residues Met-1 to Gly-33. The PH domain maps to His-39–Gly-152. 4 disordered regions span residues Pro-176–His-200, Leu-215–Ser-234, Ser-293–Glu-331, and Pro-418–Thr-513. Positions Cys-181–Thr-193 are enriched in polar residues. 2 stretches are compositionally biased toward polar residues: residues Gly-302 to Tyr-318 and Leu-424 to Val-442. The segment covering Ser-457–Thr-478 has biased composition (low complexity). Polar residues predominate over residues Gly-502–Thr-513.

The protein belongs to the GAB family.

The sequence is that of GRB2-associated-binding protein 4 (GAB4) from Homo sapiens (Human).